The sequence spans 316 residues: UPF0324 membrane protein SO_4708 (316 aa).

Helical transmembrane passes span 61 to 80, 85 to 107, 114 to 136, 146 to 168, 175 to 197, 207 to 226, 233 to 252, 262 to 281, and 293 to 315; these read LLSY…AAIE, NLGL…TRAL, GHLI…APAV, ALAC…GHLL, FGVW…SAYG, IKLA…ALIF, LNLP…AHWL, LFMV…GAGI, and PLLL…ILYF.

Belongs to the UPF0324 family.

The protein localises to the cell membrane. The sequence is that of UPF0324 membrane protein SO_4708 from Shewanella oneidensis (strain ATCC 700550 / JCM 31522 / CIP 106686 / LMG 19005 / NCIMB 14063 / MR-1).